A 332-amino-acid polypeptide reads, in one-letter code: Glycerol-3-phosphate dehydrogenase [NAD(P)+] (332 aa).

NADPH-binding residues include Ser-11, Phe-12, Lys-32, and Lys-106. Residues Lys-106, Gly-137, and Ser-139 each coordinate sn-glycerol 3-phosphate. Ala-141 lines the NADPH pocket. Residues Lys-192, Asp-245, Ser-255, Arg-256, and Asn-257 each coordinate sn-glycerol 3-phosphate. Lys-192 (proton acceptor) is an active-site residue. Arg-256 serves as a coordination point for NADPH. NADPH is bound by residues Val-280 and Glu-282.

This sequence belongs to the NAD-dependent glycerol-3-phosphate dehydrogenase family.

It localises to the cytoplasm. It catalyses the reaction sn-glycerol 3-phosphate + NAD(+) = dihydroxyacetone phosphate + NADH + H(+). It carries out the reaction sn-glycerol 3-phosphate + NADP(+) = dihydroxyacetone phosphate + NADPH + H(+). It functions in the pathway membrane lipid metabolism; glycerophospholipid metabolism. In terms of biological role, catalyzes the reduction of the glycolytic intermediate dihydroxyacetone phosphate (DHAP) to sn-glycerol 3-phosphate (G3P), the key precursor for phospholipid synthesis. This Staphylococcus carnosus (strain TM300) protein is Glycerol-3-phosphate dehydrogenase [NAD(P)+].